The following is a 372-amino-acid chain: DNA-directed RNA polymerase subunit alpha (372 aa).

The alpha N-terminal domain (alpha-NTD) stretch occupies residues 1 to 268; the sequence is MIFDEDSNSI…DQFQPFINFD (268 aa). Residues 280-372 form an alpha C-terminal domain (alpha-CTD) region; sequence KDTLPYDSNL…ESLSKQYSEE (93 aa).

This sequence belongs to the RNA polymerase alpha chain family. As to quaternary structure, homodimer. The RNAP catalytic core consists of 2 alpha, 1 beta, 1 beta' and 1 omega subunit. When a sigma factor is associated with the core the holoenzyme is formed, which can initiate transcription.

It catalyses the reaction RNA(n) + a ribonucleoside 5'-triphosphate = RNA(n+1) + diphosphate. Functionally, DNA-dependent RNA polymerase catalyzes the transcription of DNA into RNA using the four ribonucleoside triphosphates as substrates. The polypeptide is DNA-directed RNA polymerase subunit alpha (Ehrlichia chaffeensis (strain ATCC CRL-10679 / Arkansas)).